A 169-amino-acid chain; its full sequence is Photosystem I assembly protein Ycf3 (169 aa).

TPR repeat units follow at residues A35 to P68, S72 to L105, and G120 to N153.

This sequence belongs to the Ycf3 family.

It localises to the plastid. The protein localises to the chloroplast thylakoid membrane. In terms of biological role, essential for the assembly of the photosystem I (PSI) complex. May act as a chaperone-like factor to guide the assembly of the PSI subunits. The polypeptide is Photosystem I assembly protein Ycf3 (Staurastrum punctulatum (Green alga)).